The primary structure comprises 891 residues: Alanine--tRNA ligase (891 aa).

Zn(2+)-binding residues include histidine 564, histidine 568, cysteine 681, and histidine 685.

This sequence belongs to the class-II aminoacyl-tRNA synthetase family. Zn(2+) serves as cofactor.

The protein localises to the cytoplasm. The catalysed reaction is tRNA(Ala) + L-alanine + ATP = L-alanyl-tRNA(Ala) + AMP + diphosphate. Its function is as follows. Catalyzes the attachment of alanine to tRNA(Ala) in a two-step reaction: alanine is first activated by ATP to form Ala-AMP and then transferred to the acceptor end of tRNA(Ala). Also edits incorrectly charged Ser-tRNA(Ala) and Gly-tRNA(Ala) via its editing domain. This chain is Alanine--tRNA ligase, found in Methylorubrum extorquens (strain PA1) (Methylobacterium extorquens).